An 86-amino-acid chain; its full sequence is Small ribosomal subunit protein bS20 (86 aa).

The protein belongs to the bacterial ribosomal protein bS20 family.

In terms of biological role, binds directly to 16S ribosomal RNA. This chain is Small ribosomal subunit protein bS20, found in Arthrobacter sp. (strain FB24).